The sequence spans 104 residues: Complex III assembly factor LYRM7 (104 aa).

S60 is subject to Phosphoserine.

The protein belongs to the complex I LYR family. Interacts with UQCRFS1.

The protein resides in the mitochondrion matrix. Assembly factor required for Rieske Fe-S protein UQCRFS1 incorporation into the cytochrome b-c1 (CIII) complex. Functions as a chaperone, binding to this subunit within the mitochondrial matrix and stabilizing it prior to its translocation and insertion into the late CIII dimeric intermediate within the mitochondrial inner membrane. This chain is Complex III assembly factor LYRM7 (Lyrm7), found in Rattus norvegicus (Rat).